Here is an 86-residue protein sequence, read N- to C-terminus: Putative membrane protein insertion efficiency factor (86 aa).

It belongs to the UPF0161 family.

Its subcellular location is the cell inner membrane. Could be involved in insertion of integral membrane proteins into the membrane. This Oleidesulfovibrio alaskensis (strain ATCC BAA-1058 / DSM 17464 / G20) (Desulfovibrio alaskensis) protein is Putative membrane protein insertion efficiency factor.